The primary structure comprises 1013 residues: MDIS1-interacting receptor like kinase 1 (1013 aa).

Positions 1–23 (MKMKIIVLFLYYCYIGSTSSVLA) are cleaved as a signal peptide. Over 24–633 (SIDNVNELSV…SSHSSLHGKR (610 aa)) the chain is Extracellular. N-linked (GlcNAc...) asparagine glycans are attached at residues asparagine 61, asparagine 82, asparagine 101, asparagine 137, asparagine 146, asparagine 151, and asparagine 155. LRR repeat units follow at residues 70-94 (NGNV…ISQL), 95-117 (SSLV…SIPP), 119-137 (KSID…LFSN), 139-163 (SLGL…LGNL), 164-186 (VSLE…SFKN), 187-213 (LQKL…QLPS), 215-234 (ETAI…EFGN), 235-259 (INSL…LGKL), 260-283 (KSLE…IGSI), 284-307 (TTLK…ITKL), 308-331 (KNLQ…ISSL), 333-355 (QLQV…LGKN), 357-379 (PLQW…LCNK), 381-403 (NLTK…LSTC), 405-426 (SLVR…GFGK), 427-451 (LEKL…ISDS), 453-475 (SLSF…ILSI), 477-498 (NLQA…QFQD), 499-523 (CPSL…IASC), 525-547 (KLVS…ITTM), 548-571 (SALA…IGTS), and 573-595 (ALEL…GFLK). The N-linked (GlcNAc...) asparagine glycan is linked to asparagine 199. N-linked (GlcNAc...) asparagine glycosylation occurs at asparagine 271. A glycan (N-linked (GlcNAc...) asparagine) is linked at asparagine 341. Asparagine 381, asparagine 389, and asparagine 417 each carry an N-linked (GlcNAc...) asparagine glycan. Asparagine 535, asparagine 557, and asparagine 578 each carry an N-linked (GlcNAc...) asparagine glycan. A helical membrane pass occupies residues 634–654 (IVAGWLIGIASVLALGILTIV). The Cytoplasmic segment spans residues 655-1013 (TRTLYKKWYS…FSTSPVNGLL (359 aa)). A Phosphothreonine modification is found at threonine 691. In terms of domain architecture, Protein kinase spans 699-983 (IKESNMIGMG…SMLGEAKPRR (285 aa)). ATP-binding positions include 705–713 (IGMGATGIV) and lysine 728. At threonine 710 the chain carries Phosphothreonine; by autocatalysis. 2 positions are modified to phosphothreonine; by autocatalysis: threonine 741 and threonine 742. Residues tyrosine 777 and tyrosine 818 each carry the phosphotyrosine modification. Aspartate 831 functions as the Proton acceptor in the catalytic mechanism. Residue threonine 862 is modified to Phosphothreonine; by autocatalysis. Serine 864 is subject to Phosphoserine; by autocatalysis. Residue tyrosine 872 is modified to Phosphotyrosine. Tyrosine 879 bears the Phosphotyrosine; by autocatalysis mark. Residues threonine 880 and threonine 992 each carry the phosphothreonine; by autocatalysis modification. The interval 976 to 1013 (LGEAKPRRKSNSNEENTSRSLAEKHSSVFSTSPVNGLL) is disordered. A compositionally biased stretch (polar residues) spans 1002-1013 (SVFSTSPVNGLL).

The protein belongs to the protein kinase superfamily. Ser/Thr protein kinase family. In terms of assembly, homodimer. Interacts with MDIS1 and LURE1.2. Post-translationally, autophosphorylation induced by the interaction with LURE1.2. As to expression, expressed in pollen tubes.

The protein resides in the cell membrane. The enzyme catalyses L-seryl-[protein] + ATP = O-phospho-L-seryl-[protein] + ADP + H(+). It catalyses the reaction L-threonyl-[protein] + ATP = O-phospho-L-threonyl-[protein] + ADP + H(+). Its function is as follows. Involved in the regulation of procambium maintenance and polarity during vascular-tissue development. Involved in the pollen tube perception of the female signal. Phosphorylates MDSI1. This chain is MDIS1-interacting receptor like kinase 1, found in Arabidopsis thaliana (Mouse-ear cress).